Reading from the N-terminus, the 178-residue chain is Large ribosomal subunit protein uL6 (178 aa).

Belongs to the universal ribosomal protein uL6 family. As to quaternary structure, part of the 50S ribosomal subunit.

Functionally, this protein binds to the 23S rRNA, and is important in its secondary structure. It is located near the subunit interface in the base of the L7/L12 stalk, and near the tRNA binding site of the peptidyltransferase center. The protein is Large ribosomal subunit protein uL6 of Coxiella burnetii (strain CbuK_Q154) (Coxiella burnetii (strain Q154)).